The following is a 148-amino-acid chain: Small ribosomal subunit protein eS6 (148 aa).

Belongs to the eukaryotic ribosomal protein eS6 family.

The chain is Small ribosomal subunit protein eS6 from Pyrobaculum islandicum (strain DSM 4184 / JCM 9189 / GEO3).